A 270-amino-acid chain; its full sequence is Formamidopyrimidine-DNA glycosylase (270 aa).

Catalysis depends on Pro-2, which acts as the Schiff-base intermediate with DNA. Glu-3 acts as the Proton donor in catalysis. The active-site Proton donor; for beta-elimination activity is the Lys-58. Residues His-91, Arg-110, and Lys-151 each contribute to the DNA site. The FPG-type zinc-finger motif lies at Phe-236 to Arg-270. The active-site Proton donor; for delta-elimination activity is Arg-260.

Belongs to the FPG family. Monomer. Zn(2+) serves as cofactor.

The catalysed reaction is Hydrolysis of DNA containing ring-opened 7-methylguanine residues, releasing 2,6-diamino-4-hydroxy-5-(N-methyl)formamidopyrimidine.. The enzyme catalyses 2'-deoxyribonucleotide-(2'-deoxyribose 5'-phosphate)-2'-deoxyribonucleotide-DNA = a 3'-end 2'-deoxyribonucleotide-(2,3-dehydro-2,3-deoxyribose 5'-phosphate)-DNA + a 5'-end 5'-phospho-2'-deoxyribonucleoside-DNA + H(+). In terms of biological role, involved in base excision repair of DNA damaged by oxidation or by mutagenic agents. Acts as a DNA glycosylase that recognizes and removes damaged bases. Has a preference for oxidized purines, such as 7,8-dihydro-8-oxoguanine (8-oxoG). Has AP (apurinic/apyrimidinic) lyase activity and introduces nicks in the DNA strand. Cleaves the DNA backbone by beta-delta elimination to generate a single-strand break at the site of the removed base with both 3'- and 5'-phosphates. This chain is Formamidopyrimidine-DNA glycosylase, found in Pseudomonas savastanoi pv. phaseolicola (strain 1448A / Race 6) (Pseudomonas syringae pv. phaseolicola (strain 1448A / Race 6)).